The chain runs to 758 residues: 5-methyltetrahydropteroyltriglutamate--homocysteine methyltransferase (758 aa).

5-methyltetrahydropteroyltri-L-glutamate-binding positions include 17 to 20 (RELK) and Lys117. Residues 434–436 (IGS) and Glu487 contribute to the L-homocysteine site. L-methionine contacts are provided by residues 434-436 (IGS) and Glu487. 5-methyltetrahydropteroyltri-L-glutamate-binding positions include 518-519 (RC) and Trp564. Asp602 serves as a coordination point for L-homocysteine. An L-methionine-binding site is contributed by Asp602. Glu608 lines the 5-methyltetrahydropteroyltri-L-glutamate pocket. Zn(2+)-binding residues include His644, Cys646, and Glu668. Residue His697 is the Proton donor of the active site. Residue Cys729 coordinates Zn(2+).

The protein belongs to the vitamin-B12 independent methionine synthase family. It depends on Zn(2+) as a cofactor.

The catalysed reaction is 5-methyltetrahydropteroyltri-L-glutamate + L-homocysteine = tetrahydropteroyltri-L-glutamate + L-methionine. Its pathway is amino-acid biosynthesis; L-methionine biosynthesis via de novo pathway; L-methionine from L-homocysteine (MetE route): step 1/1. Its function is as follows. Catalyzes the transfer of a methyl group from 5-methyltetrahydrofolate to homocysteine resulting in methionine formation. The chain is 5-methyltetrahydropteroyltriglutamate--homocysteine methyltransferase from Serratia proteamaculans (strain 568).